A 292-amino-acid polypeptide reads, in one-letter code: Fat storage-inducing transmembrane protein 1 (292 aa).

At 1-18 (MERGPTVGAGLGAGTRVR) the chain is on the lumenal side. Residues 19–39 (ALLGCLVKVLLWVASALLYFG) form a helical membrane-spanning segment. Residues 40–54 (SEQAARLLGSPCLRR) are Cytoplasmic-facing. Residues 55 to 75 (LYHAWLAAVVIFGPLLQFHVN) traverse the membrane as a helical segment. The Lumenal portion of the chain corresponds to 76 to 94 (SRTIFASHGNFFNIKFVNS). Residues 95–115 (AWGWTCTFLGGFVLLVVFLAT) traverse the membrane as a helical segment. Topologically, residues 116–141 (RRVAVTARHLSRLVVGAAVWRGAGRA) are cytoplasmic. The chain crosses the membrane as a helical span at residues 142–162 (FLLIEDLTGSCFEPLPQGLLL). Residues 163 to 187 (HELPDRKSCLAAGHQWRGYTVSSHT) are Lumenal-facing. Residue H186 is part of the active site. The helical transmembrane segment at 188-208 (FLLTFCCLLMAEEAAVFAKYL) threads the bilayer. At 209–220 (AHGLPAGAPLRL) the chain is on the cytoplasmic side. Residues 221 to 241 (VFLLNVLLLGLWNFLLLCTVI) form a helical membrane-spanning segment. The Lumenal portion of the chain corresponds to 242-249 (YFHQYTHK). The active site involves H244. The chain crosses the membrane as a helical span at residues 250 to 270 (VVGAAVGTFAWYLTYGSWYHQ). Over 271-292 (PWSPGIPGHGLFPRSRSMRKHN) the chain is Cytoplasmic.

This sequence belongs to the FIT family. FIT1 subfamily. As to expression, predominantly expressed in skeletal muscle and at lower levels in the heart (at protein level). In the heart, mRNA expression levels do not correlate well with protein levels, suggesting post-transcriptional regulation in this organ.

It is found in the endoplasmic reticulum membrane. Plays an important role in the formation of lipid droplets (LDs) which are storage organelles at the center of lipid and energy homeostasis. Directly binds to diacylglycerol (DAGs) and triacylglycerol. The chain is Fat storage-inducing transmembrane protein 1 from Mus musculus (Mouse).